The following is a 258-amino-acid chain: 5'-nucleotidase SurE (258 aa).

D9, D10, S42, and N96 together coordinate a divalent metal cation.

The protein belongs to the SurE nucleotidase family. A divalent metal cation serves as cofactor.

The protein localises to the cytoplasm. It carries out the reaction a ribonucleoside 5'-phosphate + H2O = a ribonucleoside + phosphate. Functionally, nucleotidase that shows phosphatase activity on nucleoside 5'-monophosphates. The sequence is that of 5'-nucleotidase SurE from Campylobacter jejuni subsp. jejuni serotype O:2 (strain ATCC 700819 / NCTC 11168).